The following is a 176-amino-acid chain: Cytochrome c oxidase subunit 5b-1, mitochondrial (176 aa).

Residues 1–55 constitute a mitochondrion transit peptide; sequence MWRRIVSSQLKTLAADVVAASPRRSIAATTRPVGFYLAANRSAISASSFVIPRRF. Zn(2+) is bound by residues Cys-122, Cys-146, and Cys-149. The disordered stretch occupies residues 157 to 176; it reads VVGPGGPPDGHGDEDDEHHH.

The protein belongs to the cytochrome c oxidase subunit 5B (TC 3.D.4.11) family.

The protein localises to the mitochondrion inner membrane. Functionally, this protein is one of the nuclear-coded polypeptide chains of cytochrome c oxidase, the terminal oxidase in mitochondrial electron transport. This Arabidopsis thaliana (Mouse-ear cress) protein is Cytochrome c oxidase subunit 5b-1, mitochondrial (COX5B-1).